The following is a 98-amino-acid chain: Large ribosomal subunit protein uL23 (98 aa).

Belongs to the universal ribosomal protein uL23 family. As to quaternary structure, part of the 50S ribosomal subunit. Contacts protein L29, and trigger factor when it is bound to the ribosome.

One of the early assembly proteins it binds 23S rRNA. One of the proteins that surrounds the polypeptide exit tunnel on the outside of the ribosome. Forms the main docking site for trigger factor binding to the ribosome. This is Large ribosomal subunit protein uL23 from Rickettsia felis (strain ATCC VR-1525 / URRWXCal2) (Rickettsia azadi).